The chain runs to 147 residues: Myoglobin (147 aa).

In terms of domain architecture, Globin spans 2–141 (ADFDAVLKFW…VIADLEANYK (140 aa)). His-60 provides a ligand contact to nitrite. Position 60 (His-60) interacts with O2. His-89 contacts heme b.

Belongs to the globin family. As to quaternary structure, monomeric.

It is found in the cytoplasm. The protein localises to the sarcoplasm. It catalyses the reaction Fe(III)-heme b-[protein] + nitric oxide + H2O = Fe(II)-heme b-[protein] + nitrite + 2 H(+). It carries out the reaction H2O2 + AH2 = A + 2 H2O. Monomeric heme protein which primary function is to store oxygen and facilitate its diffusion within muscle tissues. Reversibly binds oxygen through a pentacoordinated heme iron and enables its timely and efficient release as needed during periods of heightened demand. Depending on the oxidative conditions of tissues and cells, and in addition to its ability to bind oxygen, it also has a nitrite reductase activity whereby it regulates the production of bioactive nitric oxide. Under stress conditions, like hypoxia and anoxia, it also protects cells against reactive oxygen species thanks to its pseudoperoxidase activity. This chain is Myoglobin (mb), found in Sarda chiliensis (Pacific bonito).